We begin with the raw amino-acid sequence, 107 residues long: Inner membrane protein YgbE (107 aa).

The Cytoplasmic segment spans residues 1-20 (MRNSHNITLTNNDSLTEDEE). Residues 21 to 43 (TTWSLPGAVVGFISWLFALAMPM) form a helical membrane-spanning segment. Over 44–52 (LIYGSNTLF) the chain is Periplasmic. Residues 53 to 75 (FFIYTWPFFLALMPVAVVVGIAL) form a helical membrane-spanning segment. Over 76 to 86 (HSLMDGKLRYS) the chain is Cytoplasmic. The chain crosses the membrane as a helical span at residues 87 to 106 (IVFTLVTVGIMFGALFMWLL). Residue Gly107 is a topological domain, periplasmic.

It localises to the cell inner membrane. The protein is Inner membrane protein YgbE (ygbE) of Escherichia coli (strain K12).